The following is a 230-amino-acid chain: Tol-Pal system protein TolQ (230 aa).

Transmembrane regions (helical) follow at residues 16–36, 139–159, and 171–191; these read LVKL…AIII, YIGL…LGAV, and IAEA…AVMA.

It belongs to the ExbB/TolQ family. The Tol-Pal system is composed of five core proteins: the inner membrane proteins TolA, TolQ and TolR, the periplasmic protein TolB and the outer membrane protein Pal. They form a network linking the inner and outer membranes and the peptidoglycan layer.

The protein localises to the cell inner membrane. Functionally, part of the Tol-Pal system, which plays a role in outer membrane invagination during cell division and is important for maintaining outer membrane integrity. Required, with TolR, for the proton motive force-dependent activation of TolA and for TolA-Pal interaction. This is Tol-Pal system protein TolQ from Escherichia coli O157:H7.